Consider the following 62-residue polypeptide: Sperm protamine P1 (62 aa).

Residues 1 to 62 (MARCRRHSRS…RYSRRGRRRY (62 aa)) form a disordered region.

Belongs to the protamine P1 family. Testis.

Its subcellular location is the nucleus. It localises to the chromosome. In terms of biological role, protamines substitute for histones in the chromatin of sperm during the haploid phase of spermatogenesis. They compact sperm DNA into a highly condensed, stable and inactive complex. This is Sperm protamine P1 (PRM1) from Planigale maculata sinualis (Common planigale).